An 83-amino-acid polypeptide reads, in one-letter code: MKTSMFLTLTGLVLLFVVCYASESEEKEFPKELPSSIFAADSDFKVEERGCLGDKCDYNNGCCSGYVCSRTWKWCVLAGPWRR.

Positions 1 to 21 (MKTSMFLTLTGLVLLFVVCYA) are cleaved as a signal peptide. Positions 22-49 (SESEEKEFPKELPSSIFAADSDFKVEER) are excised as a propeptide. Disulfide bonds link Cys51–Cys63, Cys56–Cys68, and Cys62–Cys75.

It belongs to the neurotoxin 10 (Hwtx-1) family. 51 (Hntx-8) subfamily. Hntx-8 sub-subfamily. Expressed by the venom gland.

Its subcellular location is the secreted. Functionally, agglutinates erythrocytes. The polypeptide is U5-theraphotoxin-Hs1a 5 (Cyriopagopus schmidti (Chinese bird spider)).